A 337-amino-acid chain; its full sequence is 4-hydroxy-3-methylbut-2-enyl diphosphate reductase (337 aa).

C25 serves as a coordination point for [4Fe-4S] cluster. Positions 54 and 87 each coordinate (2E)-4-hydroxy-3-methylbut-2-enyl diphosphate. The dimethylallyl diphosphate site is built by H54 and H87. Isopentenyl diphosphate-binding residues include H54 and H87. C109 is a [4Fe-4S] cluster binding site. H137 lines the (2E)-4-hydroxy-3-methylbut-2-enyl diphosphate pocket. H137 contacts dimethylallyl diphosphate. Residue H137 coordinates isopentenyl diphosphate. Catalysis depends on E139, which acts as the Proton donor. (2E)-4-hydroxy-3-methylbut-2-enyl diphosphate is bound at residue T177. C207 is a [4Fe-4S] cluster binding site. Residues S235, S236, N237, and S280 each contribute to the (2E)-4-hydroxy-3-methylbut-2-enyl diphosphate site. The dimethylallyl diphosphate site is built by S235, S236, N237, and S280. Residues S235, S236, N237, and S280 each coordinate isopentenyl diphosphate.

The protein belongs to the IspH family. It depends on [4Fe-4S] cluster as a cofactor.

The catalysed reaction is isopentenyl diphosphate + 2 oxidized [2Fe-2S]-[ferredoxin] + H2O = (2E)-4-hydroxy-3-methylbut-2-enyl diphosphate + 2 reduced [2Fe-2S]-[ferredoxin] + 2 H(+). It carries out the reaction dimethylallyl diphosphate + 2 oxidized [2Fe-2S]-[ferredoxin] + H2O = (2E)-4-hydroxy-3-methylbut-2-enyl diphosphate + 2 reduced [2Fe-2S]-[ferredoxin] + 2 H(+). The protein operates within isoprenoid biosynthesis; dimethylallyl diphosphate biosynthesis; dimethylallyl diphosphate from (2E)-4-hydroxy-3-methylbutenyl diphosphate: step 1/1. It functions in the pathway isoprenoid biosynthesis; isopentenyl diphosphate biosynthesis via DXP pathway; isopentenyl diphosphate from 1-deoxy-D-xylulose 5-phosphate: step 6/6. Catalyzes the conversion of 1-hydroxy-2-methyl-2-(E)-butenyl 4-diphosphate (HMBPP) into a mixture of isopentenyl diphosphate (IPP) and dimethylallyl diphosphate (DMAPP). Acts in the terminal step of the DOXP/MEP pathway for isoprenoid precursor biosynthesis. The polypeptide is 4-hydroxy-3-methylbut-2-enyl diphosphate reductase (Leifsonia xyli subsp. xyli (strain CTCB07)).